We begin with the raw amino-acid sequence, 155 residues long: FAD synthase (155 aa).

ATP contacts are provided by residues 9–10, 14–17, and D92; these read TF and HPGH.

It belongs to the archaeal FAD synthase family. Homodimer. A divalent metal cation serves as cofactor.

It carries out the reaction FMN + ATP + H(+) = FAD + diphosphate. It functions in the pathway cofactor biosynthesis; FAD biosynthesis; FAD from FMN: step 1/1. Its function is as follows. Catalyzes the transfer of the AMP portion of ATP to flavin mononucleotide (FMN) to produce flavin adenine dinucleotide (FAD) coenzyme. The sequence is that of FAD synthase from Archaeoglobus profundus (strain DSM 5631 / JCM 9629 / NBRC 100127 / Av18).